Consider the following 385-residue polypeptide: V-type proton ATPase subunit C (385 aa).

The protein belongs to the V-ATPase C subunit family. As to quaternary structure, V-ATPase is a heteromultimeric enzyme made up of two complexes: the ATP-hydrolytic V1 complex and the proton translocation V0 complex. The V1 complex consists of three catalytic AB heterodimers that form a heterohexamer, three peripheral stalks each consisting of EG heterodimers, one central rotor including subunits D and F, and the regulatory subunits C and H. The proton translocation complex V0 consists of the proton transport subunit a, a ring of proteolipid subunits c9c'', rotary subunit d, subunits e and f, and the accessory subunits VhaAC45 and ATP6AP2.

Subunit of the V1 complex of vacuolar(H+)-ATPase (V-ATPase), a multisubunit enzyme composed of a peripheral complex (V1) that hydrolyzes ATP and a membrane integral complex (V0) that translocates protons. V-ATPase is responsible for acidifying and maintaining the pH of intracellular compartments and in some cell types, is targeted to the plasma membrane, where it is responsible for acidifying the extracellular environment. Subunit C is necessary for the assembly of the catalytic sector of the enzyme and is likely to have a specific function in its catalytic activity. The protein is V-type proton ATPase subunit C of Manduca sexta (Tobacco hawkmoth).